The following is a 150-amino-acid chain: 3-dehydroquinate dehydratase (150 aa).

The active-site Proton acceptor is Tyr26. Substrate is bound by residues Asn77, His83, and Asp90. His103 acts as the Proton donor in catalysis. Residues 104–105 (IS) and Arg114 contribute to the substrate site.

This sequence belongs to the type-II 3-dehydroquinase family. Homododecamer.

The enzyme catalyses 3-dehydroquinate = 3-dehydroshikimate + H2O. The protein operates within metabolic intermediate biosynthesis; chorismate biosynthesis; chorismate from D-erythrose 4-phosphate and phosphoenolpyruvate: step 3/7. Its function is as follows. Catalyzes a trans-dehydration via an enolate intermediate. This is 3-dehydroquinate dehydratase from Buchnera aphidicola subsp. Acyrthosiphon pisum (strain 5A).